The sequence spans 256 residues: DNA repair protein RecO (256 aa).

This sequence belongs to the RecO family.

Involved in DNA repair and RecF pathway recombination. This chain is DNA repair protein RecO, found in Desulforamulus reducens (strain ATCC BAA-1160 / DSM 100696 / MI-1) (Desulfotomaculum reducens).